The primary structure comprises 320 residues: ADP-L-glycero-D-manno-heptose-6-epimerase (320 aa).

NADP(+) is bound by residues 10–11, 31–32, K38, K53, 75–79, and N92; these read FI, DN, and LGACS. The active-site Proton acceptor is Y139. K143 provides a ligand contact to NADP(+). N168 is a binding site for substrate. V169 and K177 together coordinate NADP(+). The active-site Proton acceptor is the K177. Substrate-binding positions include G179, H186, 200–203, R213, and Y277; that span reads FEGS.

The protein belongs to the NAD(P)-dependent epimerase/dehydratase family. HldD subfamily. As to quaternary structure, homopentamer. Requires NADP(+) as cofactor.

The enzyme catalyses ADP-D-glycero-beta-D-manno-heptose = ADP-L-glycero-beta-D-manno-heptose. It participates in nucleotide-sugar biosynthesis; ADP-L-glycero-beta-D-manno-heptose biosynthesis; ADP-L-glycero-beta-D-manno-heptose from D-glycero-beta-D-manno-heptose 7-phosphate: step 4/4. Its function is as follows. Catalyzes the interconversion between ADP-D-glycero-beta-D-manno-heptose and ADP-L-glycero-beta-D-manno-heptose via an epimerization at carbon 6 of the heptose. This chain is ADP-L-glycero-D-manno-heptose-6-epimerase, found in Alkalilimnicola ehrlichii (strain ATCC BAA-1101 / DSM 17681 / MLHE-1).